We begin with the raw amino-acid sequence, 162 residues long: Proepiregulin (162 aa).

An N-terminal signal peptide occupies residues 1-22 (METFPAAWVLALLCLGSHLLQA). Residues 23 to 55 (VISTTVIPSCIPEESEDNCTALVQMEDDPRVAQ) constitute a propeptide that is removed on maturation. The N-linked (GlcNAc...) asparagine glycan is linked to Asn40. Residues 57-97 (LITKCSSDMDGYCLHGHCIYLVDMSEKYCRCEVGYTGLRCE) enclose the EGF-like domain. Cystine bridges form between Cys61–Cys74, Cys69–Cys85, and Cys87–Cys96. Positions 102–162 (TVHQPLSREY…TSGGPGLPQV (61 aa)) are cleaved as a propeptide — removed in mature form. The chain crosses the membrane as a helical span at residues 113–133 (ALTVILVFLFLIVTAGSMYYF).

In terms of assembly, interacts with EGFR and ERBB4.

Its subcellular location is the secreted. The protein resides in the extracellular space. It is found in the cell membrane. Functionally, ligand of the EGF receptor/EGFR and ERBB4. Stimulates EGFR and ERBB4 tyrosine phosphorylation. Contributes to inflammation, wound healing, tissue repair, and oocyte maturation by regulating angiogenesis and vascular remodeling and by stimulating cell proliferation. The protein is Proepiregulin (Ereg) of Rattus norvegicus (Rat).